A 176-amino-acid chain; its full sequence is Ribosome rescue factor SmrB (176 aa).

A Smr domain is found at 97–172 (LDMHGMTQQE…GDGALLVLLS (76 aa)).

This sequence belongs to the SmrB family. As to quaternary structure, associates with collided ribosomes, but not with correctly translating polysomes.

Its function is as follows. Acts as a ribosome collision sensor. Detects stalled/collided disomes (pairs of ribosomes where the leading ribosome is stalled and a second ribosome has collided with it) and endonucleolytically cleaves mRNA at the 5' boundary of the stalled ribosome. Stalled/collided disomes form a new interface (primarily via the 30S subunits) that binds SmrB. Cleaved mRNA becomes available for tmRNA ligation, leading to ribosomal subunit dissociation and rescue of stalled ribosomes. This is Ribosome rescue factor SmrB from Vibrio vulnificus (strain YJ016).